A 209-amino-acid chain; its full sequence is MARYCGPKNRIARRFGANIFGRGRNPLLRKPNPPGQHGMQRKKKSDYGLQLEEKQKLKACYGMILEKQLVKAYKEVVHKQGNVAQMFLEKFECRLDNIVYRLGFAKTIFAAQQLVSHGHVLVNGKKVDRRSFFVRPGMQISLKEKSRRLAIVTESLENKDQSSLPAYLSLDKAAFKGELVVSPELDQISSQLPLPVNVSVICEFLSHRT.

The interval 22–45 is disordered; the sequence is RGRNPLLRKPNPPGQHGMQRKKKS. An S4 RNA-binding domain is found at 93 to 154; that stretch reads CRLDNIVYRL…KSRRLAIVTE (62 aa).

It belongs to the universal ribosomal protein uS4 family. In terms of assembly, part of the 30S ribosomal subunit. Contacts protein S5. The interaction surface between S4 and S5 is involved in control of translational fidelity.

In terms of biological role, one of the primary rRNA binding proteins, it binds directly to 16S rRNA where it nucleates assembly of the body of the 30S subunit. Its function is as follows. With S5 and S12 plays an important role in translational accuracy. The sequence is that of Small ribosomal subunit protein uS4 from Chlamydia muridarum (strain MoPn / Nigg).